The chain runs to 108 residues: MVKFCPKCNNLMLPKDGKLKCAVCGYEEETTAEGSKEYEYKEHLENKKEKITVIESEGLETLPTTRIECPKCGHNEAYWWLQQTRCADEPETRFYKCKKCGHTWREYD.

Cys-5, Cys-8, Cys-21, Cys-24, Cys-69, Cys-72, Cys-97, and Cys-100 together coordinate Zn(2+). Residues 5–24 (CPKCNNLMLPKDGKLKCAVC) form a C4-type zinc finger. A TFIIS-type zinc finger spans residues 65-105 (TRIECPKCGHNEAYWWLQQTRCADEPETRFYKCKKCGHTWR).

This sequence belongs to the archaeal RpoM/eukaryotic RPA12/RPB9/RPC11 RNA polymerase family.

Its function is as follows. Induces RNA cleavage activity in the RNA polymerase. In its presence, the cleavage activity of the RNA polymerase truncates the RNA back to position +15 in a stepwise manner by releasing mainly dinucleotides from the 3'-end of the nascent RNA. The truncated RNAs are able to continue elongation. Involved in transcriptional proofreading and fidelity. Misincorporation of nucleotides during elongation of transcription leads to arrested elongation complexes which are rescued by TFS-promoted removal of a dinucleotide from the 3'-end. TFS is able to induce a cleavage resynthesis cycle in stalled elongation complexes (resulting from the next missing nucleotide or a reduced incorporation rate of a wrong nucleotide) preventing misincorporation and enabling proofreading in a post-incorporation manner. Pausing of elongation complexes is the main determinant of TFS-induced RNA cleavage. The protein is Transcription factor S of Methanocaldococcus jannaschii (strain ATCC 43067 / DSM 2661 / JAL-1 / JCM 10045 / NBRC 100440) (Methanococcus jannaschii).